Consider the following 646-residue polypeptide: Long-chain fatty acid transport protein 1 (646 aa).

The Extracellular segment spans residues 1 to 13; it reads MRAPGAGSASVAS. The chain crosses the membrane as a helical span at residues 14 to 34; that stretch reads LVLLWLLGLPWTWSTAAALGV. At 35–646 the chain is on the cytoplasmic side; that stretch reads YVGGGGWRFL…TRICSGAFAL (612 aa). The interval 191-475 is sufficient for oligomerization; the sequence is EMSGELGKSL…YISESATSKK (285 aa). 246-257 contacts AMP; it reads YIYTSGTTGLPK.

The protein belongs to the ATP-dependent AMP-binding enzyme family. As to quaternary structure, self-associates. May function as a homodimer. Interacts with EPRS1; mediates the translocation of SLC27A1 from the cytoplasm to the plasma membrane thereby increasing the uptake of long-chain fatty acids. Interacts with DGAT2 and this interaction is enhanced in the presence of ZFYVE1.

It is found in the cell membrane. The protein resides in the endomembrane system. The protein localises to the cytoplasm. The catalysed reaction is a fatty acid(in) = a fatty acid(out). It carries out the reaction (9Z)-octadecenoate(out) = (9Z)-octadecenoate(in). It catalyses the reaction hexadecanoate(out) = hexadecanoate(in). The enzyme catalyses (5Z,8Z,11Z,14Z)-eicosatetraenoate(out) = (5Z,8Z,11Z,14Z)-eicosatetraenoate(in). The catalysed reaction is (9Z,12Z)-octadecadienoate(out) = (9Z,12Z)-octadecadienoate(in). It carries out the reaction a long-chain fatty acid + ATP + CoA = a long-chain fatty acyl-CoA + AMP + diphosphate. It catalyses the reaction (5Z,8Z,11Z,14Z)-eicosatetraenoate + ATP + CoA = (5Z,8Z,11Z,14Z)-eicosatetraenoyl-CoA + AMP + diphosphate. The enzyme catalyses a very long-chain fatty acid + ATP + CoA = a very long-chain fatty acyl-CoA + AMP + diphosphate. The catalysed reaction is tetracosanoate + ATP + CoA = tetracosanoyl-CoA + AMP + diphosphate. Its activity is regulated as follows. Inhibited by Triacsin C. Its function is as follows. Mediates the import of long-chain fatty acids (LCFA) into the cell by facilitating their transport at the plasma membrane. Also functions as an acyl-CoA ligase catalyzing the ATP-dependent formation of fatty acyl-CoA using LCFA and very-long-chain fatty acids (VLCFA) as substrates, which prevents fatty acid efflux from cells and might drive more fatty acid uptake. May act directly as a bona fide transporter, or alternatively, in a cytoplasmic or membrane-associated multimeric protein complex to trap and draw fatty acids towards accumulation. Plays a pivotal role in regulating available LCFA substrates from exogenous sources in tissues undergoing high levels of beta-oxidation or triglyceride synthesis. May be involved in regulation of cholesterol metabolism. Probably involved in fatty acid transport across the blood barrier. The polypeptide is Long-chain fatty acid transport protein 1 (Bos taurus (Bovine)).